Here is a 497-residue protein sequence, read N- to C-terminus: 4,4'-diaponeurosporene oxygenase (497 aa).

Residue 7–19 participates in FAD binding; sequence VIGGGLGGISAAI.

This sequence belongs to the carotenoid/retinoid oxidoreductase family. CrtP subfamily. FAD is required as a cofactor.

The catalysed reaction is all-trans-4,4'-diaponeurosporene + 2 AH2 + 2 O2 = 4,4'-diaponeurosporenal + 2 A + 3 H2O. It participates in carotenoid biosynthesis; staphyloxanthin biosynthesis; staphyloxanthin from farnesyl diphosphate: step 3/5. Its function is as follows. Involved in the biosynthesis of the yellow-orange carotenoid staphyloxanthin, which plays a role in the virulence via its protective function against oxidative stress. Catalyzes the oxidation of the terminal methyl side group of 4,4'-diaponeurosporene to form 4,4'-diaponeurosporen-4-al. This chain is 4,4'-diaponeurosporene oxygenase, found in Staphylococcus aureus (strain MSSA476).